Here is a 261-residue protein sequence, read N- to C-terminus: Cytochrome c oxidase subunit 3 (261 aa).

Residues 1-15 are Mitochondrial matrix-facing; it reads MTHQTHAYHMVNPSP. A helical transmembrane segment spans residues 16–34; it reads WPLTGALSALLMTSGLIMW. The Mitochondrial intermembrane segment spans residues 35 to 40; it reads FHFNST. The chain crosses the membrane as a helical span at residues 41–66; that stretch reads TLLMLGLTTNMLTMYQWWRDVIREST. Topologically, residues 67-72 are mitochondrial matrix; sequence FQGHHT. The chain crosses the membrane as a helical span at residues 73–105; the sequence is PNVQKGLRYGMILFIISEVLFFTGFFWAFYHSS. Topologically, residues 106–128 are mitochondrial intermembrane; sequence LAPTPELGGCWPPTGINPLNPLE. The helical transmembrane segment at 129 to 152 threads the bilayer; it reads VPLLNTSVLLASGVSITWAHHSLM. The Mitochondrial matrix portion of the chain corresponds to 153–155; the sequence is EGN. The helical transmembrane segment at 156-183 threads the bilayer; that stretch reads RNHMLQALFITIALGVYFTLLQASEYYE. The Mitochondrial intermembrane segment spans residues 184–190; it reads APFTISD. A helical transmembrane segment spans residues 191 to 223; that stretch reads GVYGSTFFVATGFHGLHVIIGSTFLIVCFFRQL. The Mitochondrial matrix portion of the chain corresponds to 224–232; that stretch reads KFHFTSNHH. A helical transmembrane segment spans residues 233 to 256; it reads FGFEAAAWYWHFVDVVWLFLYVSI. The Mitochondrial intermembrane portion of the chain corresponds to 257 to 261; that stretch reads YWWGS.

Belongs to the cytochrome c oxidase subunit 3 family. As to quaternary structure, component of the cytochrome c oxidase (complex IV, CIV), a multisubunit enzyme composed of 14 subunits. The complex is composed of a catalytic core of 3 subunits MT-CO1, MT-CO2 and MT-CO3, encoded in the mitochondrial DNA, and 11 supernumerary subunits COX4I, COX5A, COX5B, COX6A, COX6B, COX6C, COX7A, COX7B, COX7C, COX8 and NDUFA4, which are encoded in the nuclear genome. The complex exists as a monomer or a dimer and forms supercomplexes (SCs) in the inner mitochondrial membrane with NADH-ubiquinone oxidoreductase (complex I, CI) and ubiquinol-cytochrome c oxidoreductase (cytochrome b-c1 complex, complex III, CIII), resulting in different assemblies (supercomplex SCI(1)III(2)IV(1) and megacomplex MCI(2)III(2)IV(2)).

It is found in the mitochondrion inner membrane. It carries out the reaction 4 Fe(II)-[cytochrome c] + O2 + 8 H(+)(in) = 4 Fe(III)-[cytochrome c] + 2 H2O + 4 H(+)(out). In terms of biological role, component of the cytochrome c oxidase, the last enzyme in the mitochondrial electron transport chain which drives oxidative phosphorylation. The respiratory chain contains 3 multisubunit complexes succinate dehydrogenase (complex II, CII), ubiquinol-cytochrome c oxidoreductase (cytochrome b-c1 complex, complex III, CIII) and cytochrome c oxidase (complex IV, CIV), that cooperate to transfer electrons derived from NADH and succinate to molecular oxygen, creating an electrochemical gradient over the inner membrane that drives transmembrane transport and the ATP synthase. Cytochrome c oxidase is the component of the respiratory chain that catalyzes the reduction of oxygen to water. Electrons originating from reduced cytochrome c in the intermembrane space (IMS) are transferred via the dinuclear copper A center (CU(A)) of subunit 2 and heme A of subunit 1 to the active site in subunit 1, a binuclear center (BNC) formed by heme A3 and copper B (CU(B)). The BNC reduces molecular oxygen to 2 water molecules using 4 electrons from cytochrome c in the IMS and 4 protons from the mitochondrial matrix. The chain is Cytochrome c oxidase subunit 3 (MT-CO3) from Gazella subgutturosa (Goitred gazelle).